A 259-amino-acid chain; its full sequence is 3-dehydroquinate dehydratase (259 aa).

3-dehydroquinate is bound by residues 50 to 52 (EWR) and Arg-86. The active-site Proton donor/acceptor is His-147. The active-site Schiff-base intermediate with substrate is Lys-174. 3 residues coordinate 3-dehydroquinate: Arg-216, Ser-235, and Gln-239.

It belongs to the type-I 3-dehydroquinase family. Homodimer.

It catalyses the reaction 3-dehydroquinate = 3-dehydroshikimate + H2O. The protein operates within metabolic intermediate biosynthesis; chorismate biosynthesis; chorismate from D-erythrose 4-phosphate and phosphoenolpyruvate: step 3/7. Involved in the third step of the chorismate pathway, which leads to the biosynthesis of aromatic amino acids. Catalyzes the cis-dehydration of 3-dehydroquinate (DHQ) and introduces the first double bond of the aromatic ring to yield 3-dehydroshikimate. The polypeptide is 3-dehydroquinate dehydratase (Geobacillus sp. (strain WCH70)).